The chain runs to 134 residues: Large ribosomal subunit protein uL16c (134 aa).

Over residues 1-17 (MLSPKRTRFRKQHRGRM) the composition is skewed to basic residues. Positions 1-22 (MLSPKRTRFRKQHRGRMKGISS) are disordered.

Belongs to the universal ribosomal protein uL16 family. In terms of assembly, part of the 50S ribosomal subunit.

The protein localises to the plastid. It localises to the chloroplast. This is Large ribosomal subunit protein uL16c from Solanum tuberosum (Potato).